Consider the following 238-residue polypeptide: Tetrahydromethanopterin S-methyltransferase subunit A 1 (238 aa).

Residues 2-218 (VEKKSPAEGW…RMFAGMYSGK (217 aa)) are Cytoplasmic-facing. Histidine 84 serves as a coordination point for 5-hydroxybenzimidazolylcob(I)amide. The helical transmembrane segment at 219 to 237 (VQGIMIGLAFTLTLGILLL) threads the bilayer. Position 238 (valine 238) is a topological domain, extracellular.

This sequence belongs to the MtrA family. In terms of assembly, the complex is composed of 8 subunits; MtrA, MtrB, MtrC, MtrD, MtrE, MtrF, MtrG and MtrH. Requires 5-hydroxybenzimidazolylcob(I)amide as cofactor.

It localises to the cell membrane. The enzyme catalyses 5-methyl-5,6,7,8-tetrahydromethanopterin + coenzyme M + 2 Na(+)(in) = 5,6,7,8-tetrahydromethanopterin + methyl-coenzyme M + 2 Na(+)(out). The protein operates within one-carbon metabolism; methanogenesis from CO(2); methyl-coenzyme M from 5,10-methylene-5,6,7,8-tetrahydromethanopterin: step 2/2. In terms of biological role, part of a complex that catalyzes the formation of methyl-coenzyme M and tetrahydromethanopterin from coenzyme M and methyl-tetrahydromethanopterin. This is an energy-conserving, sodium-ion translocating step. The protein is Tetrahydromethanopterin S-methyltransferase subunit A 1 of Methanothermobacter marburgensis (strain ATCC BAA-927 / DSM 2133 / JCM 14651 / NBRC 100331 / OCM 82 / Marburg) (Methanobacterium thermoautotrophicum).